Here is a 310-residue protein sequence, read N- to C-terminus: Syndecan-1 (310 aa).

The first 22 residues, M1 to P22, serve as a signal peptide directing secretion. Residues Q23 to G254 are Extracellular-facing. Disordered regions lie at residues T27 to K100 and L114 to T212. Acidic residues predominate over residues E32–D42. The O-linked (Xyl...) (chondroitin sulfate) serine glycan is linked to S37. N43 is a glycosylation site (N-linked (GlcNAc...) asparagine). 2 O-linked (Xyl...) (heparan sulfate) serine glycosylation sites follow: S45 and S47. Positions I55–P75 are enriched in polar residues. A compositionally biased stretch (basic and acidic residues) spans R117–E127. Low complexity predominate over residues T128–S151. A compositionally biased stretch (basic and acidic residues) spans P153–T164. Residues S206 and S216 are each glycosylated (O-linked (Xyl...) (chondroitin sulfate) serine). Residues G255 to L275 form a helical membrane-spanning segment. Residues Y276–A310 lie on the Cytoplasmic side of the membrane. Residues G284 to A310 are disordered. S285 bears the Phosphoserine mark.

The protein belongs to the syndecan proteoglycan family. Interacts with CDCP1. Interacts (via C-terminus) with TIAM1 (via PDZ domain). Interacts with MDK. Post-translationally, shedding is enhanced by a number of factors such as heparanase, thrombin or EGF. Also by stress and wound healing. PMA-mediated shedding is inhibited by TIMP3. Detected in placenta (at protein level). Detected in fibroblasts (at protein level).

Its subcellular location is the membrane. It localises to the secreted. It is found in the extracellular exosome. Functionally, cell surface proteoglycan that contains both heparan sulfate and chondroitin sulfate and that links the cytoskeleton to the interstitial matrix. Regulates exosome biogenesis in concert with SDCBP and PDCD6IP. Able to induce its own expression in dental mesenchymal cells and also in the neighboring dental epithelial cells via an MSX1-mediated pathway. In Homo sapiens (Human), this protein is Syndecan-1.